The chain runs to 125 residues: UPF0538 protein C2C4.04c (125 aa).

Belongs to the UPF0538 family.

The polypeptide is UPF0538 protein C2C4.04c (Schizosaccharomyces pombe (strain 972 / ATCC 24843) (Fission yeast)).